A 264-amino-acid chain; its full sequence is MTNLHRDLAPISAAAWAEIEEEASRTFKRHVAGRRVVDVEGPSGDDLAAIPLGHQVPINPLADGVIAHARQSQPVIELRVPFTVSRQAIDDVERGAKDSDWQPVKDAAKQIAFAEDRAIFEGYPAASITGVRASGSNPELKLPIDAKDYPEAISQAITSLRLAGVNGPYSLLLNADAFTAINETSDHGYPIREHLRRVLDGEIIWAPAIDGAFLLSTRGGDYELHLGQDLSIGYLSHDANSVELYFQESMTFLMYTSEAVVSLA.

The protein belongs to the encapsulin family. Family 1 subfamily. Forms hollow shells composed of 60 subunits. Monomers probably form pentamers which assemble into the shell. There are 12 pores where the pentamers meet as well as 3-fold axis channels and dimer channels; none are larger than 3-4 Angstroms in diameter. The N-terminus of the protein is inside the shell, the C-terminus is outside.

Its subcellular location is the encapsulin nanocompartment. Functionally, shell component of a type 1 encapsulin nanocompartment. Assembles into proteinaceous shells 21-24 nm in diameter. Empty organelles can be expressed in E.coli. Cargo proteins (DypB) are targeted to the interior via their C-terminal extensions. This Rhodococcus erythropolis (strain PR4 / NBRC 100887) protein is Type 1 encapsulin shell protein.